Here is a 569-residue protein sequence, read N- to C-terminus: Sulfite reductase [NADPH] hemoprotein beta-component (569 aa).

Residues cysteine 433, cysteine 439, cysteine 478, and cysteine 482 each coordinate [4Fe-4S] cluster. Cysteine 482 lines the siroheme pocket.

The protein belongs to the nitrite and sulfite reductase 4Fe-4S domain family. As to quaternary structure, alpha(8)-beta(8). The alpha component is a flavoprotein, the beta component is a hemoprotein. The cofactor is siroheme. It depends on [4Fe-4S] cluster as a cofactor.

It catalyses the reaction hydrogen sulfide + 3 NADP(+) + 3 H2O = sulfite + 3 NADPH + 4 H(+). It participates in sulfur metabolism; hydrogen sulfide biosynthesis; hydrogen sulfide from sulfite (NADPH route): step 1/1. Component of the sulfite reductase complex that catalyzes the 6-electron reduction of sulfite to sulfide. This is one of several activities required for the biosynthesis of L-cysteine from sulfate. This chain is Sulfite reductase [NADPH] hemoprotein beta-component, found in Buchnera aphidicola subsp. Acyrthosiphon pisum (strain 5A).